Consider the following 417-residue polypeptide: NADH-quinone oxidoreductase subunit D (417 aa).

The protein belongs to the complex I 49 kDa subunit family. As to quaternary structure, NDH-1 is composed of 14 different subunits. Subunits NuoB, C, D, E, F, and G constitute the peripheral sector of the complex.

It is found in the cell inner membrane. It carries out the reaction a quinone + NADH + 5 H(+)(in) = a quinol + NAD(+) + 4 H(+)(out). In terms of biological role, NDH-1 shuttles electrons from NADH, via FMN and iron-sulfur (Fe-S) centers, to quinones in the respiratory chain. The immediate electron acceptor for the enzyme in this species is believed to be ubiquinone. Couples the redox reaction to proton translocation (for every two electrons transferred, four hydrogen ions are translocated across the cytoplasmic membrane), and thus conserves the redox energy in a proton gradient. The protein is NADH-quinone oxidoreductase subunit D of Francisella tularensis subsp. novicida (strain U112).